Consider the following 694-residue polypeptide: Scarecrow-like protein 33 (694 aa).

Positions 289–313 are disordered; that stretch reads PAKASTFSKSPKGEKPEASGNSYTK. Residues 309 to 692 form the GRAS domain; sequence NSYTKETPDL…RIVYGSSIWV (384 aa). Residues 316 to 376 form a leucine repeat I (LRI) region; it reads PDLRTMLVSC…EARLAGIGTQ (61 aa). The interval 395-462 is VHIID; it reads YQTYISVCPF…GSSCKLRITG (68 aa). The VHIID signature appears at 428–432; that stretch reads IHIID. The tract at residues 478–510 is leucine repeat II (LRII); it reads ETGRRLAKYCQKFNIPFEYNAIAQKWESIKLED. A PFYRE region spans residues 519 to 613; the sequence is VAVNSLFRFR…KEFYGREIMN (95 aa). Residues 616–692 are SAW; it reads ACEGTERVER…RIVYGSSIWV (77 aa).

This sequence belongs to the GRAS family. In terms of assembly, interacts with SNRNP35.

It localises to the nucleus. Functionally, probable transcription factor involved in plant development. In Arabidopsis thaliana (Mouse-ear cress), this protein is Scarecrow-like protein 33 (SCL33).